The sequence spans 148 residues: Large ribosomal subunit protein uL22c (148 aa).

This sequence belongs to the universal ribosomal protein uL22 family. Part of the 50S ribosomal subunit.

The protein localises to the plastid. It is found in the chloroplast. Its function is as follows. This protein binds specifically to 23S rRNA. Functionally, the globular domain of the protein is located near the polypeptide exit tunnel on the outside of the subunit, while an extended beta-hairpin is found that lines the wall of the exit tunnel in the center of the 70S ribosome. This chain is Large ribosomal subunit protein uL22c (rpl22), found in Triticum aestivum (Wheat).